The primary structure comprises 576 residues: Putative ankyrin repeat protein L86 (576 aa).

11 ANK repeats span residues 68-101 (HGWT…DPNI), 118-147 (TRIN…NVNF), 159-188 (SGGF…NPNI), 192-223 (KGNT…DLNS), 227-260 (KRKT…NPNI), 264-300 (KGNT…NPNI), 304-337 (SGIS…DPNI), 341-373 (QGLT…DPNI), 377-408 (KGKN…NPNA), 412-446 (KGRT…SLTD), and 448-480 (NGKK…TFDV).

In Acanthamoeba polyphaga mimivirus (APMV), this protein is Putative ankyrin repeat protein L86.